A 556-amino-acid polypeptide reads, in one-letter code: Genetic interactor of prohibitins 3, mitochondrial (556 aa).

A mitochondrion-targeting transit peptide spans 1–21 (MLNLCHALRGVRQFSCSVIVK). Positions 113–305 (ESTLNDILNY…LFDLPGYSTS (193 aa)) constitute a CP-type G domain.

It belongs to the TRAFAC class YlqF/YawG GTPase family. GEP3 subfamily.

It is found in the mitochondrion. In terms of biological role, interacts genetically with prohibitins and thus may be involved in the mitochondrial lipid metabolism. The polypeptide is Genetic interactor of prohibitins 3, mitochondrial (GEP3) (Saccharomyces cerevisiae (strain ATCC 204508 / S288c) (Baker's yeast)).